Reading from the N-terminus, the 79-residue chain is Cytoinsectotoxin-3 (79 aa).

This sequence belongs to the cationic peptide 06 (cytoinsectotoxin) family. As to expression, expressed by the venom gland.

It localises to the secreted. In terms of biological role, insecticidal and antimicrobial peptide. Has insecticidal activity against larvae of flesh fly S.carnaria. Has antibacterial activity against Gram-positive bacterium B.subtilis B-501 (MIC=0.63 uM) and Gram-negative bacterium E.coli DH5alpha (MIC=2.5 uM). This is Cytoinsectotoxin-3 from Lachesana tarabaevi (Spider).